The following is a 343-amino-acid chain: Putative dihydroflavonol 4-reductase (343 aa).

Tyrosine 150 contacts NADP(+).

Belongs to the NAD(P)-dependent epimerase/dehydratase family. Dihydroflavonol-4-reductase subfamily.

It carries out the reaction a (2R,3S,4S)-leucoanthocyanidin + NADP(+) = a (2R,3R)-dihydroflavonol + NADPH + H(+). The protein operates within secondary metabolite biosynthesis; flavonoid biosynthesis. The chain is Putative dihydroflavonol 4-reductase (dfrA) from Synechocystis sp. (strain ATCC 27184 / PCC 6803 / Kazusa).